A 300-amino-acid polypeptide reads, in one-letter code: MDSYEKEESVASTSGIQDLQTLSELVGPENAGEGELTIAEEPEENPRRPRRYTKREVKCVSYHAYKEIEDKHPQHIKLQDWIPTPEEMSKSLCKRLILCGLYSAEKASEILRMPFTVSWEQSDTDPDCFIVSYTCIFCDAVIHDPMPIRWDPEVGIWVKYKPLRGIVGSAVFIMHKHQRNCSLVKPSTSCSEGPKPRPRHDPVLRCDMFEKHHKPRQKRPRRRSIDNESCASSSDTMANEPGSLCTNPLWNPGPLLSGLLEESSNLPNLEVHMSGGPFWEEVYGDSILGPPSGSGEHSVL.

Residues 1 to 50 (MDSYEKEESVASTSGIQDLQTLSELVGPENAGEGELTIAEEPEENPRRPR) are disordered. Positions 10–23 (VASTSGIQDLQTLS) are enriched in polar residues. Residues 89-200 (SKSLCKRLIL…SEGPKPRPRH (112 aa)) mediate DNA binding. The disordered stretch occupies residues 209 to 244 (FEKHHKPRQKRPRRRSIDNESCASSSDTMANEPGSL). The segment covering 211–222 (KHHKPRQKRPRR) has biased composition (basic residues). A Nuclear localization signal motif is present at residues 214–223 (KPRQKRPRRR). Residues 224–300 (SIDNESCASS…PSGSGEHSVL (77 aa)) form a transactivation domain region. Positions 227-237 (NESCASSSDTM) are enriched in polar residues.

Homodimer or homomultimer. Forms complexes with the host nuclear factors NFIA, NFIB, NFIC or NFIX.

It localises to the host nucleus. Its function is as follows. Transcriptional transactivator that activates the viral internal promoter (IP), thereby enhancing its own expression. This transactivation is repressed by nuclear factor I. Also transactivates the long terminal repeat (LTR) promoter, thereby inducing structural gene expression, initiating the late phase of infection. It is therefore a key regulator of viral gene expression. It directly binds to and activates DNA target sites of viral promoters and those of distinct cellular genes. Required for viral replication. In Human spumaretrovirus (SFVcpz(hu)), this protein is Protein Bel-1 (bel1).